A 622-amino-acid polypeptide reads, in one-letter code: MSLDISQFPVLAQANTPNELRQLPQALLPQVADELREFLLKSVGISSGHFASGLGTVELTVALHYVYNTPFDRLIWDVGHQAYPHKILTGRRDKMHTIRQKDGLHPFPWREESEYDTFSVGHSGTSISAALAMAIAAEKEQAGRKVVAVIGDGAMTGGMVFEAMNHAGDLHNDMLVVLNDNEMSISENVGALNNHLAQLMSGRFYTTLREGGKKVLKGMPVIKEMAKRTEEHLKGMVVPGTLFEELGFNYIGPIDGHDVDALVETMRNMRNLKGPQVLHIMTKKGRGYEPAEKDPIGWHAVPKFDPSLFKKPTTKPGLPTFSQVFGKWLCDIAEQDEKVLAITPAMREGSGMVEFSQRFPKQYFDAAIAEQHAVTLSAGFACEGFKPVVAIYSTFLQRAYDQLIHDVALQKLPVLFAIDRGGIVGADGPTHQGAFDLSFMRCIPNMVIMAPSDENECRQMLYTGYCYDAGPSAVRYPRGCATGATQVEAMTALPIGKGVIKRVGKRIAILNFGTLLASALTAAESLDATVVDMRFVKPLDVDLVKEMAQTHEVLVTVEENAIMGGAGAGVLEQLQKLRMPKAVLQIGLPDEFIKHGSPEEVTHDLQLDAEGILAQINAYLAQ.

Residues His80 and Gly121 to Ser123 each bind thiamine diphosphate. Asp152 is a binding site for Mg(2+). Residues Gly153–Ala154, Asn181, Tyr288, and Glu370 each bind thiamine diphosphate. Residue Asn181 coordinates Mg(2+).

The protein belongs to the transketolase family. DXPS subfamily. As to quaternary structure, homodimer. Mg(2+) serves as cofactor. Thiamine diphosphate is required as a cofactor.

The enzyme catalyses D-glyceraldehyde 3-phosphate + pyruvate + H(+) = 1-deoxy-D-xylulose 5-phosphate + CO2. Its pathway is metabolic intermediate biosynthesis; 1-deoxy-D-xylulose 5-phosphate biosynthesis; 1-deoxy-D-xylulose 5-phosphate from D-glyceraldehyde 3-phosphate and pyruvate: step 1/1. Catalyzes the acyloin condensation reaction between C atoms 2 and 3 of pyruvate and glyceraldehyde 3-phosphate to yield 1-deoxy-D-xylulose-5-phosphate (DXP). The polypeptide is 1-deoxy-D-xylulose-5-phosphate synthase (Shewanella baltica (strain OS155 / ATCC BAA-1091)).